Reading from the N-terminus, the 85-residue chain is Delta/kappa-theraphotoxin-Pm1a (85 aa).

The first 19 residues, 1–19 (MKTFVFIVLVALAFVLTAA), serve as a signal peptide directing secretion. Positions 20-43 (KEERANPSELVSALAELVMLDAER) are excised as a propeptide. Disulfide bonds link C50–C64, C57–C69, and C63–C77.

This sequence belongs to the neurotoxin 10 (Hwtx-1) family. In terms of tissue distribution, expressed by the venom gland.

The protein resides in the secreted. In terms of biological role, multimodal toxin that enhances nociceptor excitability mainly by the simultaneous stimulation of repetitive firing (through Nav1.8/SCN10A channel current enhancement) and impairment of repolarization (by inhibiting delayed rectifier current of Kv2.1/KCNB1), with a potential contribution from tetrodotoxin-sensitive voltage-gated sodium channels (Nav) modified excitability. Enhances Nav1.8/SCN10A currents (EC(50)=1.1 uM), modifies the channel gating by a right-shift in steady-state inactivation and delays open-state inactivation. Also decreases Kv2.1/KCNB1 currents (IC(50)=0.43 uM) and causes a depolarizing shift in the voltage dependence of activation without change in steady-state inactivation. In addition, inhibits peak currents of human sodium channels (Nav1.1 to Nav1.7, IC(50)=0.38-2.3 uM) and delays fast inactivation of Nav1.1/SCN1A, Nav1.3/SCN3A, Nav1.6/SCN8A, and Nav1.7/SCN9A. In small dorsal root ganglion neurons, induces hyperexcitability by enhancing tetrodotoxin-resistant sodium currents, impairing repolarization and lowering the threshold of action potential firing, consistent with the severe pain associated with envenomation. In vivo, elicits nocifensive behavior in mice after intraplantar injection. The chain is Delta/kappa-theraphotoxin-Pm1a from Pelinobius muticus (King baboon spider).